Reading from the N-terminus, the 332-residue chain is Autoinducer 2 import system permease protein LsrD (332 aa).

7 helical membrane passes run 5–25 (LNWE…FGAL), 43–63 (ICIG…GIDI), 83–103 (GWPL…CGLF), 116–136 (LVIT…LSGM), 160–180 (LGGL…FWLL), 210–230 (IPYV…LVMV), and 259–279 (IYGG…VGYL).

This sequence belongs to the binding-protein-dependent transport system permease family. AraH/RbsC subfamily. In terms of assembly, the complex is composed of two ATP-binding proteins (LsrA), two transmembrane proteins (LsrC and LsrD) and a solute-binding protein (LsrB).

It is found in the cell inner membrane. Part of the ABC transporter complex LsrABCD involved in autoinducer 2 (AI-2) import. Probably responsible for the translocation of the substrate across the membrane. This is Autoinducer 2 import system permease protein LsrD (lsrD) from Klebsiella pneumoniae subsp. pneumoniae (strain ATCC 700721 / MGH 78578).